The following is a 222-amino-acid chain: Tetratricopeptide repeat protein 9A (222 aa).

Disordered stretches follow at residues 1-49 and 88-116; these read MERK…AAAE and KGLLPPPGERERDSRPASPAGALKPGRLS. A TPR 1 repeat occupies 56–89; the sequence is RAHEFKSQGAQCYKDKKFREAIGKYHRALLELKG. Ser-105 is subject to Phosphoserine. TPR repeat units lie at residues 125-160 and 161-194; these read AIEIDCYNSLAACLLQAELVNYERVKEYCLKVLKKE and GENFKALYRSGVAFYHLGDYDKALYYLKEARTQQ.

Belongs to the TTC9 family.

The protein is Tetratricopeptide repeat protein 9A (TTC9) of Homo sapiens (Human).